Consider the following 454-residue polypeptide: 3-phosphoshikimate 1-carboxyvinyltransferase (454 aa).

3 residues coordinate 3-phosphoshikimate: Lys-39, Ser-40, and Arg-44. Lys-39 lines the phosphoenolpyruvate pocket. Phosphoenolpyruvate contacts are provided by Gly-112 and Arg-140. Residues Ser-185, Gln-187, Asp-333, and Lys-360 each coordinate 3-phosphoshikimate. Gln-187 is a phosphoenolpyruvate binding site. Asp-333 functions as the Proton acceptor in the catalytic mechanism. The phosphoenolpyruvate site is built by Arg-364 and Arg-405.

The protein belongs to the EPSP synthase family. As to quaternary structure, monomer.

It localises to the cytoplasm. It carries out the reaction 3-phosphoshikimate + phosphoenolpyruvate = 5-O-(1-carboxyvinyl)-3-phosphoshikimate + phosphate. It functions in the pathway metabolic intermediate biosynthesis; chorismate biosynthesis; chorismate from D-erythrose 4-phosphate and phosphoenolpyruvate: step 6/7. In terms of biological role, catalyzes the transfer of the enolpyruvyl moiety of phosphoenolpyruvate (PEP) to the 5-hydroxyl of shikimate-3-phosphate (S3P) to produce enolpyruvyl shikimate-3-phosphate and inorganic phosphate. The sequence is that of 3-phosphoshikimate 1-carboxyvinyltransferase from Xylella fastidiosa (strain 9a5c).